Consider the following 347-residue polypeptide: MKFVDEATIKVKAGDGGNGCVSFRREKFVPFGGPDGGDGGDGGSVYLVATHDLNTLADFRFQRHYEAQRGENGSGRNMTGASGADLEVPVPVGTLAYDAETEELIGDLVEHGQRLLVAQGGFHGLGNTRYKTSTNRAPRQSKPGTPGELRVLRLELKLLADVGLLGLPNAGKSTLITQVSGARPKIADYPFTTLYPGLGVVRVGPLQSFVMADIPGLIEGAAEGAGLGIQFLKHLSRTRLLLHLVDVAPADPAEDPVAAVHTIEAELQQFSEDLASRPRWLVLNKIDLIAPDERESFTKELVARLGWEGPVYAISAATGEACESLMQAIMKYLEEAQSHDADTATAG.

The Obg domain occupies 1–159 (MKFVDEATIK…RVLRLELKLL (159 aa)). A disordered region spans residues 127–146 (NTRYKTSTNRAPRQSKPGTP). Positions 129-138 (RYKTSTNRAP) are enriched in polar residues. Residues 160–334 (ADVGLLGLPN…LMQAIMKYLE (175 aa)) form the OBG-type G domain. Residues 166–173 (GLPNAGKS), 191–195 (FTTLY), 213–216 (DIPG), 284–287 (NKID), and 315–317 (SAA) contribute to the GTP site. Mg(2+)-binding residues include serine 173 and threonine 193.

It belongs to the TRAFAC class OBG-HflX-like GTPase superfamily. OBG GTPase family. In terms of assembly, monomer. Requires Mg(2+) as cofactor.

It localises to the cytoplasm. Functionally, an essential GTPase which binds GTP, GDP and possibly (p)ppGpp with moderate affinity, with high nucleotide exchange rates and a fairly low GTP hydrolysis rate. Plays a role in control of the cell cycle, stress response, ribosome biogenesis and in those bacteria that undergo differentiation, in morphogenesis control. The polypeptide is GTPase Obg (Thioalkalivibrio sulfidiphilus (strain HL-EbGR7)).